A 139-amino-acid polypeptide reads, in one-letter code: Translation initiation factor 5A (139 aa).

K36 bears the Hypusine mark.

The protein belongs to the eIF-5A family.

The protein localises to the cytoplasm. Functionally, functions by promoting the formation of the first peptide bond. In Aeropyrum pernix (strain ATCC 700893 / DSM 11879 / JCM 9820 / NBRC 100138 / K1), this protein is Translation initiation factor 5A (eif5a).